A 430-amino-acid chain; its full sequence is T-kininogen 1 (430 aa).

The first 18 residues, 1 to 18, serve as a signal peptide directing secretion; sequence MKLITILLLCSRLLPSLA. Glutamine 19 carries the pyrrolidone carboxylic acid modification. A Cystatin kininogen-type 1 domain is found at 28 to 131; the sequence is CNDETVFQAV…TQICNITPGK (104 aa). 9 disulfides stabilise this stretch: cysteine 28-cysteine 404, cysteine 83-cysteine 94, cysteine 107-cysteine 125, cysteine 141-cysteine 144, cysteine 205-cysteine 217, cysteine 228-cysteine 247, cysteine 263-cysteine 266, cysteine 327-cysteine 339, and cysteine 350-cysteine 369. An N-linked (GlcNAc...) asparagine glycan is attached at asparagine 82. The 104-residue stretch at 150–253 folds into the Cystatin kininogen-type 2 domain; sequence MDSSDLKPVL…SQSCDLYPGD (104 aa). N-linked (GlcNAc...) asparagine glycans are attached at residues asparagine 168 and asparagine 204. In terms of domain architecture, Cystatin kininogen-type 3 spans 272-375; sequence VDSPELKEAL…TVRCQALDMM (104 aa). Asparagine 326 carries N-linked (GlcNAc...) asparagine glycosylation. The tract at residues 411–430 is disordered; it reads SKARAGPAPDHQAEASTVTP.

In terms of processing, as T-kinin is preceded by a Met instead of an Arg or Lys, it is not released from its precursor by either tissue or plasma kallikrein. In terms of tissue distribution, plasma.

The protein localises to the secreted. The protein resides in the extracellular space. Kininogens are plasma glycoproteins with a number of functions: (1) as precursor of the active peptide bradykinin they effect smooth muscle contraction, induction of hypotension and increase of vascular permeability. (2) They play a role in blood coagulation by helping to position optimally prekallikrein and factor XI next to factor XII. (3) They are inhibitor of thiol proteases. In Rattus norvegicus (Rat), this protein is T-kininogen 1 (Map1).